A 224-amino-acid chain; its full sequence is Deoxyribose-phosphate aldolase (224 aa).

Asp-92 serves as the catalytic Proton donor/acceptor. Lys-155 acts as the Schiff-base intermediate with acetaldehyde in catalysis. The active-site Proton donor/acceptor is the Lys-184.

It belongs to the DeoC/FbaB aldolase family. DeoC type 1 subfamily.

It localises to the cytoplasm. It carries out the reaction 2-deoxy-D-ribose 5-phosphate = D-glyceraldehyde 3-phosphate + acetaldehyde. Its pathway is carbohydrate degradation; 2-deoxy-D-ribose 1-phosphate degradation; D-glyceraldehyde 3-phosphate and acetaldehyde from 2-deoxy-alpha-D-ribose 1-phosphate: step 2/2. Its function is as follows. Catalyzes a reversible aldol reaction between acetaldehyde and D-glyceraldehyde 3-phosphate to generate 2-deoxy-D-ribose 5-phosphate. This chain is Deoxyribose-phosphate aldolase, found in Clostridium perfringens (strain 13 / Type A).